Here is a 1643-residue protein sequence, read N- to C-terminus: Outer membrane protein B (1643 aa).

Positions 1329-1352 (GTLRYLSNAETSDVAGSATGAVSS) are excised as a propeptide. One can recognise an Autotransporter domain in the interval 1355–1643 (EAEVSYGVWA…QGTLKVRVNF (289 aa)).

This sequence belongs to the rickettsiae OmpA/OmpB family.

The protein resides in the periplasm. Its subcellular location is the secreted. The protein localises to the cell surface. It is found in the cell outer membrane. In terms of biological role, the 120 kDa surface-exposed protein is a major structural protein which may play a role as a rickettsial virulence factor and/or immunogen during infection. The 32 kDa beta peptide may serve as a membrane anchor. It has been shown to adhere to biotinylated Vero cell proteins. This Rickettsia prowazekii (strain Madrid E) protein is Outer membrane protein B (ompB).